The primary structure comprises 270 residues: Ribitol operon repressor (270 aa).

The HTH lacI-type domain occupies 1–61; the sequence is MKKITIYDLA…INRQASMLRS (61 aa). Positions 6 to 25 form a DNA-binding region, H-T-H motif; that stretch reads IYDLAELSGVSASAVSAILN.

Its function is as follows. Repressor for the genes of the ribitol operon. Binds D-ribulose as an inducer. This is Ribitol operon repressor (rbtR) from Klebsiella aerogenes (Enterobacter aerogenes).